The sequence spans 154 residues: Large ribosomal subunit protein uL13 (154 aa).

This sequence belongs to the universal ribosomal protein uL13 family. In terms of assembly, part of the 50S ribosomal subunit.

This protein is one of the early assembly proteins of the 50S ribosomal subunit, although it is not seen to bind rRNA by itself. It is important during the early stages of 50S assembly. The polypeptide is Large ribosomal subunit protein uL13 (Allorhizobium ampelinum (strain ATCC BAA-846 / DSM 112012 / S4) (Agrobacterium vitis (strain S4))).